Reading from the N-terminus, the 488-residue chain is Probable indole-3-acetic acid-amido synthetase GH3.6 (488 aa).

It belongs to the IAA-amido conjugating enzyme family. In terms of tissue distribution, expressed in roots and callus.

Its function is as follows. May catalyze the synthesis of indole-3-acetic acid (IAA)-amino acid conjugates, providing a mechanism for the plant to cope with the presence of excess auxin. This chain is Probable indole-3-acetic acid-amido synthetase GH3.6 (GH3.6), found in Oryza sativa subsp. japonica (Rice).